The primary structure comprises 762 residues: Endonuclease MutS2 (762 aa).

The disordered stretch occupies residues methionine 1–proline 22. Over residues leucine 9–threonine 20 the composition is skewed to low complexity. Glycine 333 to threonine 340 serves as a coordination point for ATP. A Smr domain is found at leucine 688 to leucine 762.

Belongs to the DNA mismatch repair MutS family. MutS2 subfamily. Homodimer. Binds to stalled ribosomes, contacting rRNA.

With respect to regulation, ATPase activity is stimulated by DNA. Functionally, endonuclease that is involved in the suppression of homologous recombination and may thus have a key role in the control of bacterial genetic diversity. Also involved in repairing oxidative DNA damage. Has ATPase activity. Binds DNA. Endonuclease that is involved in the suppression of homologous recombination and thus may have a key role in the control of bacterial genetic diversity. Its function is as follows. Acts as a ribosome collision sensor, splitting the ribosome into its 2 subunits. Detects stalled/collided 70S ribosomes which it binds and splits by an ATP-hydrolysis driven conformational change. Acts upstream of the ribosome quality control system (RQC), a ribosome-associated complex that mediates the extraction of incompletely synthesized nascent chains from stalled ribosomes and their subsequent degradation. Probably generates substrates for RQC. This is Endonuclease MutS2 from Helicobacter pylori (strain ATCC 700392 / 26695) (Campylobacter pylori).